We begin with the raw amino-acid sequence, 212 residues long: ER lumen protein-retaining receptor 1 (212 aa).

At 1 to 4 (MNLF) the chain is on the lumenal side. A helical transmembrane segment spans residues 5 to 24 (RFLGDLSHLLAIILLLLKIW). The Cytoplasmic segment spans residues 25–32 (KSRSCAGI). The chain crosses the membrane as a helical span at residues 33 to 52 (SGKSQVLFAVVFTARYLDLF). Residues 47 to 48 (RY) form an interaction with the K-D-E-L motif on target proteins region. At 53–58 (TNYISL) the chain is on the lumenal side. A helical transmembrane segment spans residues 59–79 (YNTCMKVVYIACSFTTVWLIY). At 80 to 92 (SKFKATYDGNHDT) the chain is on the cytoplasmic side. A helical membrane pass occupies residues 93 to 110 (FRVEFLVVPTAILAFLVN). Topologically, residues 111 to 116 (HDFTPL) are lumenal. The helical transmembrane segment at 117-135 (EILWTFSIYLESVAILPQL) threads the bilayer. The Cytoplasmic segment spans residues 136 to 149 (FMVSKTGEAETITS). Residues 150 to 168 (HYLFALGVYRTLYLFNWIW) traverse the membrane as a helical segment. The interval 159 to 169 (RTLYLFNWIWR) is interaction with the K-D-E-L motif on target proteins. Over 169–178 (RYHFEGFFDL) the chain is Lumenal. The helical transmembrane segment at 179-199 (IAIVAGLVQTVLYCDFFYLYI) threads the bilayer. At 200–212 (TKVLKGKKLSLPA) the chain is on the cytoplasmic side. An important for recycling of cargo proteins with the sequence motif K-D-E-L from the Golgi to the endoplasmic reticulum region spans residues 204 to 207 (KGKK). Ser209 carries the phosphoserine; by PKA modification.

This sequence belongs to the ERD2 family. As to quaternary structure, upon ligand binding the receptor oligomerizes and interacts with components of the transport machinery such as ARFGAP1 and ARF1. Phosphorylation by PKA at Ser-209 is required for endoplasmic reticulum retention function.

It localises to the golgi apparatus membrane. The protein resides in the cytoplasmic vesicle. It is found in the COPI-coated vesicle membrane. Its subcellular location is the endoplasmic reticulum membrane. The protein localises to the endoplasmic reticulum-Golgi intermediate compartment membrane. In terms of biological role, receptor for the C-terminal sequence motif K-D-E-L that is present on endoplasmic reticulum resident proteins and that mediates their recycling from the Golgi back to the endoplasmic reticulum. The protein is ER lumen protein-retaining receptor 1 (KDELR1) of Homo sapiens (Human).